We begin with the raw amino-acid sequence, 445 residues long: Tubby-like F-box protein 10 (445 aa).

In terms of domain architecture, F-box spans 57-112; it reads SRWANLPPELLFDVIKRLEESESNWPARKHVVACASVCRSWRAMCQEIVLGPEICG. Low complexity predominate over residues 382-398; that stretch reads PQPQGTGAAAAPTSAPA. The segment at 382-401 is disordered; it reads PQPQGTGAAAAPTSAPAHPE.

This sequence belongs to the TUB family. As to quaternary structure, part of a SCF (ASK-cullin-F-box) protein ligase complex. Interacts with SKP1A/ASK1. Ubiquitous.

It is found in the nucleus. Its pathway is protein modification; protein ubiquitination. Functionally, component of SCF(ASK-cullin-F-box) E3 ubiquitin ligase complexes, which may mediate the ubiquitination and subsequent proteasomal degradation of target proteins. This chain is Tubby-like F-box protein 10, found in Arabidopsis thaliana (Mouse-ear cress).